The primary structure comprises 418 residues: Acyltransferase calJ (418 aa).

The active-site Acyl-ester intermediate is Ser79. Residues Arg176 and Tyr191 each coordinate substrate.

This sequence belongs to the class-A beta-lactamase family.

Its pathway is secondary metabolite biosynthesis. Acyltransferase; part of the gene cluster that mediates the biosynthesis of calbistrin A and related compounds. Calbistrin A is a secondary metabolite with an interesting structure that was recently found to have bioactivity against leukemia cells. It consists of two polyketides linked by an ester bond: a bicyclic decalin containing polyketide and a linear 12 carbon dioic acid structure. The polyketide synthase calA is probably responsible for forming the decalin moiety. Because calA lacks a designated enoylreductase (ER) domain, the required activity is provided by the trans-enoyl reductase calK. Following release from the PKS, calF then probably catalyzes the oxidation and the subsequent Diels Alder cycloisomerization that lead to the formation of the decalin moiety. The decalin polyketide backbone includes two C-methyl groups, at C7 and C11 in backbone, of which the C7 position is probably methylated by the methyltransferase domain of calA. A candidate for adding the methyl group at C11, if not done by CalA, is the cluster methyltransferase calH. Several additional tailoring enzymes within the cluster could be involved in the modification of the decalin polyketide product. Those include the 3 cytochrome P450 monooxygenases CalE, CalG and CalL, of which one might be responsible for the introduction of the extra hydroxyl group attached to the backbone of the decalin moiety, at position C9 in the backbone, that allows for attachment of the linear moiety. One tailoring enzyme activity that is expected to be involved in biosynthesis of calbistrin is an acyltransferase for connecting the two polyketide synthase products, and which could be performed by the cluster acyltransferase calJ. The enzyme responsible for the biosynthesis of the linear moiety, probably a second PKS, has not been identified yet. The polypeptide is Acyltransferase calJ (Penicillium decumbens).